Here is a 119-residue protein sequence, read N- to C-terminus: Protein FATTY ACID EXPORT 5 (119 aa).

3 helical membrane passes run 27 to 47 (SIASLAGGAGTGLLVVLAGFI), 57 to 77 (TSLLATLLETVIAAALTFVMG), and 85 to 105 (KIMPAALVAGISALMTCFYVY).

Belongs to the TMEM14 family.

It is found in the membrane. Functionally, may be involved in free fatty acids export. This is Protein FATTY ACID EXPORT 5 from Arabidopsis thaliana (Mouse-ear cress).